A 650-amino-acid chain; its full sequence is DNA-directed RNA polymerase III subunit rpc3 (650 aa).

Disordered stretches follow at residues 133–163 (PTAVNGNHEQPEKEIEGEGVEGEGIEEEGHT), 264–283 (RGAKRRRGPGGAERSNKKAR), 288–313 (AVDEDEEEEEENEWSEDEMGGDNIPM), and 400–440 (LAGS…SSDG). Residues 149–158 (GEGVEGEGIE) show a composition bias toward acidic residues. Residues 288 to 307 (AVDEDEEEEEENEWSEDEMG) are compositionally biased toward acidic residues. The interval 577-598 (TYKSMSRCLQRLRFERNRLKEF) is leucine-zipper.

It belongs to the RNA polymerase beta chain family. As to quaternary structure, component of the RNA polymerase III (Pol III) complex consisting of 17 subunits.

The protein resides in the nucleus. In terms of biological role, DNA-dependent RNA polymerase catalyzes the transcription of DNA into RNA using the four ribonucleoside triphosphates as substrates. Specific core component of RNA polymerase III which synthesizes small RNAs, such as 5S rRNA and tRNAs. The polypeptide is DNA-directed RNA polymerase III subunit rpc3 (rpc82) (Aspergillus terreus (strain NIH 2624 / FGSC A1156)).